The sequence spans 921 residues: Glutamate receptor 3.7 (921 aa).

An N-terminal signal peptide occupies residues 1–25 (MGLGIDPSVAITALIVVILVVPMDC). The Extracellular segment spans residues 26 to 580 (QRPQLVNIGA…WIFLRPFTSR (555 aa)). N-linked (GlcNAc...) asparagine glycosylation is found at Asn-214, Asn-300, Asn-330, Asn-369, Asn-396, Asn-478, and Asn-568. Residues 581–601 (LWCVVLVSFLVIAVVIWILEH) traverse the membrane as a helical segment. Residues 602-608 (RINEDFR) lie on the Cytoplasmic side of the membrane. The chain crosses the membrane as a helical span at residues 609–629 (GPPRRQLSTMLLFSFSTLFKR). The Cytoplasmic portion of the chain corresponds to 630 to 640 (NQEDTISNLAR). Residues 641–661 (LVMIVWLFLLMVLTASYTANL) form a helical membrane-spanning segment. Topologically, residues 662–822 (TSILTVQQLP…PEPNQLHLKS (161 aa)) are extracellular. The helical transmembrane segment at 823–843 (FKGLYLVCIAITVSAFLVFVL) threads the bilayer. Residues 844-921 (RMIRQFVRYR…VQADTEVPRN (78 aa)) are Cytoplasmic-facing. The segment at 896–921 (FRRSDDSNNNPSHVGEVQADTEVPRN) is disordered.

Belongs to the glutamate-gated ion channel (TC 1.A.10.1) family. May form heteromers. In terms of tissue distribution, expressed predominantly in leaves and siliques. Also detected in roots.

Its subcellular location is the membrane. Functionally, glutamate-gated receptor that probably acts as a non-selective cation channel. May be involved in light-signal transduction and calcium homeostasis via the regulation of calcium influx into cells. This is Glutamate receptor 3.7 (GLR3.7) from Arabidopsis thaliana (Mouse-ear cress).